The sequence spans 498 residues: MRINPTTSGPGVSTLEKKNLGRIAQIIGPVLDVAFPPGKMPNIYNALVVKGRDTVGQQINVACEVQQLLGNNRVRAVAMSATDGLMRGMEVIDTGAPLSVPVGGATLGRIFNVLGEPVDNLGPVDTRTTSPIHRSAPAFIQLDTKLSIFETGIKVVDLLAPYRRGGKIGLFGGAGVGKTVLIMELINNIAKAHGGVSVFGGVGERTREGNDLYMEMKESGVINEQNIAESKVALVHGQMNEPPGARMRVGLTALTMAEYFRDVNEQDVLLFIDNIFRFVQAGSEVSALLGRMPSAVGYQPTLSTEMGSLQERITSTKEGSITSIQAVYVPADDLTDPAPATTFAHLDATTVLSRGLAAKGIYPAVDPLDSTSTMLQPRIVGEEHYETAQRVKQTSQRYKELQDIIAILGLDELSEEDRLTVARARKMERFLSQPFFVAEVFTGSPGKYVGLAETIRGFQLILSGELDGLPEQAFYLVGNIDEATAKAMKLELESNLKK.

172–179 (GGAGVGKT) serves as a coordination point for ATP.

It belongs to the ATPase alpha/beta chains family. As to quaternary structure, F-type ATPases have 2 components, CF(1) - the catalytic core - and CF(0) - the membrane proton channel. CF(1) has five subunits: alpha(3), beta(3), gamma(1), delta(1), epsilon(1). CF(0) has four main subunits: a(1), b(1), b'(1) and c(9-12).

Its subcellular location is the plastid. It is found in the chloroplast thylakoid membrane. The enzyme catalyses ATP + H2O + 4 H(+)(in) = ADP + phosphate + 5 H(+)(out). Produces ATP from ADP in the presence of a proton gradient across the membrane. The catalytic sites are hosted primarily by the beta subunits. The protein is ATP synthase subunit beta, chloroplastic of Idiospermum australiense (Ribbonwood tree).